The following is a 226-amino-acid chain: LexA repressor (226 aa).

Positions 28–48 (RAEICQSLGFRSPNAAESHLR) form a DNA-binding region, H-T-H motif. Catalysis depends on for autocatalytic cleavage activity residues Ser133 and Lys170.

Belongs to the peptidase S24 family. Homodimer.

The catalysed reaction is Hydrolysis of Ala-|-Gly bond in repressor LexA.. Functionally, represses a number of genes involved in the response to DNA damage (SOS response), including recA and lexA. In the presence of single-stranded DNA, RecA interacts with LexA causing an autocatalytic cleavage which disrupts the DNA-binding part of LexA, leading to derepression of the SOS regulon and eventually DNA repair. The sequence is that of LexA repressor from Halorhodospira halophila (strain DSM 244 / SL1) (Ectothiorhodospira halophila (strain DSM 244 / SL1)).